The following is a 102-amino-acid chain: NADH-quinone oxidoreductase subunit K (102 aa).

A run of 3 helical transmembrane segments spans residues 5 to 25, 31 to 51, and 62 to 82; these read LGHY…GIFL, IVLL…FVAF, and VFVF…LAIL.

The protein belongs to the complex I subunit 4L family. In terms of assembly, NDH-1 is composed of 14 different subunits. Subunits NuoA, H, J, K, L, M, N constitute the membrane sector of the complex.

It localises to the cell inner membrane. The catalysed reaction is a quinone + NADH + 5 H(+)(in) = a quinol + NAD(+) + 4 H(+)(out). Functionally, NDH-1 shuttles electrons from NADH, via FMN and iron-sulfur (Fe-S) centers, to quinones in the respiratory chain. The immediate electron acceptor for the enzyme in this species is believed to be ubiquinone. Couples the redox reaction to proton translocation (for every two electrons transferred, four hydrogen ions are translocated across the cytoplasmic membrane), and thus conserves the redox energy in a proton gradient. This chain is NADH-quinone oxidoreductase subunit K, found in Methylibium petroleiphilum (strain ATCC BAA-1232 / LMG 22953 / PM1).